A 318-amino-acid polypeptide reads, in one-letter code: Ornithine carbamoyltransferase (318 aa).

Residues 63-66 (STRT), Gln-90, Arg-114, and 141-144 (HPCQ) each bind carbamoyl phosphate. L-ornithine contacts are provided by residues Asn-172, Asp-235, and 239-240 (SM). Carbamoyl phosphate is bound by residues 275–276 (CL) and Arg-303.

It belongs to the aspartate/ornithine carbamoyltransferase superfamily. OTCase family.

The protein localises to the cytoplasm. It carries out the reaction carbamoyl phosphate + L-ornithine = L-citrulline + phosphate + H(+). It participates in amino-acid biosynthesis; L-arginine biosynthesis; L-arginine from L-ornithine and carbamoyl phosphate: step 1/3. In terms of biological role, reversibly catalyzes the transfer of the carbamoyl group from carbamoyl phosphate (CP) to the N(epsilon) atom of ornithine (ORN) to produce L-citrulline. The protein is Ornithine carbamoyltransferase of Parasynechococcus marenigrum (strain WH8102).